The chain runs to 177 residues: Large ribosomal subunit protein uL10 (177 aa).

It belongs to the universal ribosomal protein uL10 family. In terms of assembly, part of the ribosomal stalk of the 50S ribosomal subunit. The N-terminus interacts with L11 and the large rRNA to form the base of the stalk. The C-terminus forms an elongated spine to which L12 dimers bind in a sequential fashion forming a multimeric L10(L12)X complex.

In terms of biological role, forms part of the ribosomal stalk, playing a central role in the interaction of the ribosome with GTP-bound translation factors. The polypeptide is Large ribosomal subunit protein uL10 (Thermoanaerobacter pseudethanolicus (strain ATCC 33223 / 39E) (Clostridium thermohydrosulfuricum)).